Here is a 365-residue protein sequence, read N- to C-terminus: uncharacterized protein (365 aa).

Helical transmembrane passes span 3 to 23 (MDTS…LYSI), 60 to 80 (IGII…LNII), 100 to 120 (VFLF…LIAI), 141 to 161 (SGIL…GDEF), 171 to 191 (AIAS…IPLL), and 280 to 300 (TALF…LALF).

To S.solfataricus C04034.

The protein resides in the cell membrane. This is an uncharacterized protein from Methanocaldococcus jannaschii (strain ATCC 43067 / DSM 2661 / JAL-1 / JCM 10045 / NBRC 100440) (Methanococcus jannaschii).